Here is a 293-residue protein sequence, read N- to C-terminus: Cell wall protein PGA31 (293 aa).

The N-terminal stretch at 1–18 is a signal peptide; that stretch reads MKFLTAASLLTLSSSALA. The N-linked (GlcNAc...) asparagine glycan is linked to Asn131. The interval 161–187 is disordered; sequence ESASSSSSSAAPEPTASSSEAPKETPV. A compositionally biased stretch (low complexity) spans 163–180; sequence ASSSSSSAAPEPTASSSE. Residue Asn190 is glycosylated (N-linked (GlcNAc...) asparagine). Residues 233–262 are disordered; it reads VPSKTASSEAAPPKTTVDSVSKPAPSGKKP. Gly271 carries the GPI-anchor amidated glycine lipid modification. A propeptide spans 272–293 (removed in mature form); sequence AANALTGGSVAIAVAAAIGLVF.

It belongs to the SRP1/TIP1 family. Post-translationally, the GPI-anchor is attached to the protein in the endoplasmic reticulum and serves to target the protein to the cell surface. There, the glucosamine-inositol phospholipid moiety is cleaved off and the GPI-modified mannoprotein is covalently attached via its lipidless GPI glycan remnant to the 1,6-beta-glucan of the outer cell wall layer.

It localises to the secreted. Its subcellular location is the cell wall. The protein resides in the membrane. Functionally, component of the cell wall involved in virulence which plays a role in the relationship between C.albicans and the host. Involved in the regulation or assembly of chitin within the cell wall. The chain is Cell wall protein PGA31 (PGA31) from Candida albicans (strain SC5314 / ATCC MYA-2876) (Yeast).